The sequence spans 295 residues: uncharacterized protein (295 aa).

The signal sequence occupies residues 1 to 26 (MKKYLALAAIVAICALWLTQNSNFEA).

This is an uncharacterized protein from Archaeoglobus fulgidus (strain ATCC 49558 / DSM 4304 / JCM 9628 / NBRC 100126 / VC-16).